Consider the following 312-residue polypeptide: Malate dehydrogenase (312 aa).

Residues 7 to 13 and aspartate 34 contribute to the NAD(+) site; that span reads GAAGGIG. The substrate site is built by arginine 81 and arginine 87. Residues asparagine 94 and 117-119 each bind NAD(+); that span reads ITN. Substrate contacts are provided by asparagine 119 and arginine 153. Histidine 177 serves as the catalytic Proton acceptor. Residue methionine 227 coordinates NAD(+).

It belongs to the LDH/MDH superfamily. MDH type 1 family. As to quaternary structure, homodimer.

It catalyses the reaction (S)-malate + NAD(+) = oxaloacetate + NADH + H(+). In terms of biological role, catalyzes the reversible oxidation of malate to oxaloacetate. The sequence is that of Malate dehydrogenase from Klebsiella pneumoniae (strain 342).